The primary structure comprises 644 residues: DNA mismatch repair protein MutL (644 aa).

The disordered stretch occupies residues 336–400 (ERPFEPSSPQ…EISRDSSLGE (65 aa)). The segment covering 373-400 (SKTHSTWDEASRVDTSRAEISRDSSLGE) has biased composition (basic and acidic residues).

It belongs to the DNA mismatch repair MutL/HexB family.

This protein is involved in the repair of mismatches in DNA. It is required for dam-dependent methyl-directed DNA mismatch repair. May act as a 'molecular matchmaker', a protein that promotes the formation of a stable complex between two or more DNA-binding proteins in an ATP-dependent manner without itself being part of a final effector complex. The sequence is that of DNA mismatch repair protein MutL from Shewanella sp. (strain MR-7).